The primary structure comprises 81 residues: Exodeoxyribonuclease 7 small subunit (81 aa).

The disordered stretch occupies residues 59–81 (KLVDKDGNEKTLDPQNASAPEEE). The span at 60–70 (LVDKDGNEKTL) shows a compositional bias: basic and acidic residues. Residues 71–81 (DPQNASAPEEE) show a composition bias toward polar residues.

The protein belongs to the XseB family. As to quaternary structure, heterooligomer composed of large and small subunits.

The protein resides in the cytoplasm. It catalyses the reaction Exonucleolytic cleavage in either 5'- to 3'- or 3'- to 5'-direction to yield nucleoside 5'-phosphates.. Functionally, bidirectionally degrades single-stranded DNA into large acid-insoluble oligonucleotides, which are then degraded further into small acid-soluble oligonucleotides. This chain is Exodeoxyribonuclease 7 small subunit, found in Lactobacillus gasseri (strain ATCC 33323 / DSM 20243 / BCRC 14619 / CIP 102991 / JCM 1131 / KCTC 3163 / NCIMB 11718 / NCTC 13722 / AM63).